Reading from the N-terminus, the 968-residue chain is MPFTLGQRWISDTESELGLGTVVAIDVRMITLLFPATGENRLYARNDSPITRVMFNPSDTITHHEGWQLKVEEVTQENGLITYIGTRLDTEETGVAMREVLLDSKLTFSKPQDRLFAGQIDRMDRFALRFRARKYQSEQFRLPWSGLRGIRASLIPHQLHIAYEVGQRHAPRVLLADEVGLGKTIEAGMIIHQQLLAGRAERVLIVVPESLQHQWLVEMLRRFNLRFSLFDDSRYSEALLDSSNPFDTEQMVICSLDFVRRNKQRLEQLADASWDLLVVDEAHHMAWSEEAPSREYQVIEQLAEHIPGVLLLTATPEQLGQQSHFARLRLLDPDRFHDYEEFVNEQQKYRPIADAVTLLLGGERLTDDKLNLLGELIDEQDIEPLLKAANSQSEDSEAARQELVTMLMDRHGTSRVLFRNTRNGVKGFPHRVLHQIKLPLPTQYQTAIKVSGIMGAKKTLDARAKDMLYPEQIYQEFEGENATWWNFDPRVEWLLNYLVANRGEKVLVICAQAATALQLEQVLREREAIRAAVFHEGLSLIERDRAAAYFASEEDGAQVLLCSEIGSEGRNFQFACQLVMFDLPFNPDLLEQRIGRLDRIGQNREIQIMVPYLEDTAQAILVRWYHEGLDAFEHTCPTGRTIYDSSYQELISYLATPSEQEGLDEFIHTCRQQHEGLKLQLEQGRDRLLEMHSNGGEHGQELAQSIAEQDNDINLVSFALNLFDIVGINQEDRSDNLIVLTPSDHMLVPDFPGLPPDGCTVTFDREQALSREDAQFVSWEHPIIRNGLDLILSGDTGSCAVSLLKNKALPVGTLLAELVYVVEAQAPKHLQLTRFLPPTPVRMLMDRNGTNLAAQVEFESFNRQLNAVNRHTSSKLVNAVQQEVHTMLQQAEALVEAQAQALIETAKREADDKLSTELARLEALKAVNPNIRDDEIEALEHNRKMVLENLNQAGWRLDAIRLVVVTHQ.

The Helicase ATP-binding domain maps to E164–D334. D177–T184 contacts ATP. A DEAH box motif is present at residues D280–H283. The Helicase C-terminal domain occupies R490–D644.

It belongs to the SNF2/RAD54 helicase family. RapA subfamily. Interacts with the RNAP. Has a higher affinity for the core RNAP than for the holoenzyme. Its ATPase activity is stimulated by binding to RNAP.

Transcription regulator that activates transcription by stimulating RNA polymerase (RNAP) recycling in case of stress conditions such as supercoiled DNA or high salt concentrations. Probably acts by releasing the RNAP, when it is trapped or immobilized on tightly supercoiled DNA. Does not activate transcription on linear DNA. Probably not involved in DNA repair. This is RNA polymerase-associated protein RapA from Yersinia pestis bv. Antiqua (strain Antiqua).